A 486-amino-acid chain; its full sequence is uncharacterized protein (486 aa).

ABC transporter domains follow at residues 2 to 241 (VEFK…KVFV) and 249 to 486 (FEKD…LLFL). 36-43 (GKNGEGKS) is a binding site for ATP.

The protein belongs to the ABC transporter superfamily.

This is an uncharacterized protein from Borreliella burgdorferi (strain ATCC 35210 / DSM 4680 / CIP 102532 / B31) (Borrelia burgdorferi).